The primary structure comprises 528 residues: Glucose-6-phosphate isomerase (528 aa).

Glutamate 322 (proton donor) is an active-site residue. Catalysis depends on residues histidine 351 and lysine 455.

It belongs to the GPI family.

It is found in the cytoplasm. It catalyses the reaction alpha-D-glucose 6-phosphate = beta-D-fructose 6-phosphate. It functions in the pathway carbohydrate biosynthesis; gluconeogenesis. The protein operates within carbohydrate degradation; glycolysis; D-glyceraldehyde 3-phosphate and glycerone phosphate from D-glucose: step 2/4. Its function is as follows. Catalyzes the reversible isomerization of glucose-6-phosphate to fructose-6-phosphate. This is Glucose-6-phosphate isomerase from Synechococcus elongatus (strain ATCC 33912 / PCC 7942 / FACHB-805) (Anacystis nidulans R2).